Here is a 128-residue protein sequence, read N- to C-terminus: Fluoride-specific ion channel FluC (128 aa).

A run of 4 helical transmembrane segments spans residues 4–24, 39–59, 71–91, and 99–119; these read LLLA…RYLI, GTLI…EFSM, FLTT…YETI, and MTLG…FVVI. Na(+) contacts are provided by Gly-78 and Thr-81.

This sequence belongs to the fluoride channel Fluc/FEX (TC 1.A.43) family.

Its subcellular location is the cell membrane. The catalysed reaction is fluoride(in) = fluoride(out). Its activity is regulated as follows. Na(+) is not transported, but it plays an essential structural role and its presence is essential for fluoride channel function. Functionally, fluoride-specific ion channel. Important for reducing fluoride concentration in the cell, thus reducing its toxicity. The polypeptide is Fluoride-specific ion channel FluC (Clostridium perfringens (strain 13 / Type A)).